The primary structure comprises 414 residues: ORC1-type DNA replication protein 11 (414 aa).

ATP contacts are provided by residues 60-64 (VGKTA), tyrosine 207, and arginine 219.

This sequence belongs to the CDC6/cdc18 family.

In terms of biological role, involved in regulation of DNA replication. The sequence is that of ORC1-type DNA replication protein 11 (cdc6k) from Haloarcula marismortui (strain ATCC 43049 / DSM 3752 / JCM 8966 / VKM B-1809) (Halobacterium marismortui).